Reading from the N-terminus, the 414-residue chain is Putative MSV199 domain-containing protein 148R (414 aa).

Residues 209–293 (DKMQISSLET…DSVVEKLGIA (85 aa)) are a coiled coil.

The protein is Putative MSV199 domain-containing protein 148R of Acheta domesticus (House cricket).